A 1173-amino-acid chain; its full sequence is Calcium-transporting ATPase 2 (1173 aa).

Residues 1–24 (MSRQDENSALLANNENNKPSYTGN) are disordered. Topologically, residues 1 to 114 (MSRQDENSAL…LQLVWAAFND (114 aa)) are cytoplasmic. Residues 7–17 (NSALLANNENN) are compositionally biased toward low complexity. The helical transmembrane segment at 115–139 (KTMQLLTVAAVVSFVLGLYELWMQP) threads the bilayer. The Vacuolar portion of the chain corresponds to 140-152 (PQYDPEGNKIKQV). A helical transmembrane segment spans residues 153-173 (DWIEGVAIMIAVFVVVLVSAA). Topologically, residues 174–349 (NDYQKELQFA…LADNISVYGC (176 aa)) are cytoplasmic. A helical membrane pass occupies residues 350 to 368 (VSAIILFLVLFTRYLFYII). Residues 369–388 (PEDGRFHDLDPAQKGSKFMN) are Vacuolar-facing. The helical transmembrane segment at 389-409 (IFITSITVIVVAVPEGLPLAV) threads the bilayer. Ca(2+)-binding residues include Val398 and Glu403. Residues 410 to 899 (TLALAFATTR…RCVSVSIKKF (490 aa)) lie on the Cytoplasmic side of the membrane. The active-site 4-aspartylphosphate intermediate is Asp445. Residues Asp445 and Thr447 each contribute to the Mg(2+) site. Residues Thr447, Lys643, 762–764 (TGD), Arg816, and Lys822 contribute to the ATP site. A Mg(2+)-binding site is contributed by Asp841. Asn844 contributes to the ATP binding site. A helical membrane pass occupies residues 900 to 922 (IQFQLIVNITAVILTFVSSVASS). Asn907 lines the Ca(2+) pocket. At 923–929 (DETSVLT) the chain is on the vacuolar side. A helical membrane pass occupies residues 930-950 (AVQLLWINLIMDTLAALALAT). Asn937 and Asp941 together coordinate Ca(2+). Topologically, residues 951–976 (DKPDPNIMDRKPRGRSTSLISVSTWK) are cytoplasmic. A helical transmembrane segment spans residues 977–998 (MILSQATLQLIVTFILHFYGPE). Residues 999-1010 (LFFKKHEDEITS) are Vacuolar-facing. The helical transmembrane segment at 1011–1029 (HQQQQLNAMTFNTFVWLQF) threads the bilayer. The Cytoplasmic segment spans residues 1030–1065 (FTMLVSRKLDEGDGISNWRGRISAANLNFFQDLGRN). The helical transmembrane segment at 1066 to 1086 (YYFLTIMAIIGSCQVLIMFFG) threads the bilayer. Topologically, residues 1087–1099 (GAPFSIARQTKSM) are vacuolar. A helical membrane pass occupies residues 1100 to 1120 (WITAVLCGMLSLIMGVLVRIC). Over 1121-1173 (PDEVAVKVFPAAFVQRFKYVFGLEFLRKNHTGKHDDEEALLEESDSPESTAFY) the chain is Cytoplasmic.

The protein belongs to the cation transport ATPase (P-type) (TC 3.A.3) family.

Its subcellular location is the vacuole membrane. It catalyses the reaction Ca(2+)(in) + ATP + H2O = Ca(2+)(out) + ADP + phosphate + H(+). This magnesium-dependent enzyme catalyzes the hydrolysis of ATP coupled with the transport of calcium. Transports the calcium to the vacuole and participates in the control of the cytosolic free calcium. This Saccharomyces cerevisiae (strain ATCC 204508 / S288c) (Baker's yeast) protein is Calcium-transporting ATPase 2 (PMC1).